The following is an 815-amino-acid chain: Leucine--tRNA ligase (815 aa).

A 'HIGH' region motif is present at residues 41–51; that stretch reads PYPSGTLHVGH. The 'KMSKS' region motif lies at 576-580; that stretch reads KMSKS. K579 contacts ATP.

Belongs to the class-I aminoacyl-tRNA synthetase family.

It localises to the cytoplasm. The catalysed reaction is tRNA(Leu) + L-leucine + ATP = L-leucyl-tRNA(Leu) + AMP + diphosphate. The protein is Leucine--tRNA ligase of Pseudothermotoga lettingae (strain ATCC BAA-301 / DSM 14385 / NBRC 107922 / TMO) (Thermotoga lettingae).